An 807-amino-acid polypeptide reads, in one-letter code: Phenylalanine--tRNA ligase beta subunit (807 aa).

The tRNA-binding domain maps to 39–153 (SARSQGVVVG…EIPAVGTPVA (115 aa)). The B5 domain occupies 407 to 491 (RTPVPLQLRR…RLVGFDKFGS (85 aa)). Mg(2+) contacts are provided by Asp-469, Asp-475, Glu-478, and Glu-479. One can recognise an FDX-ACB domain in the interval 713–806 (PTVPASERDL…LSKQFKAELR (94 aa)).

This sequence belongs to the phenylalanyl-tRNA synthetase beta subunit family. Type 1 subfamily. In terms of assembly, tetramer of two alpha and two beta subunits. Mg(2+) is required as a cofactor.

It is found in the cytoplasm. It carries out the reaction tRNA(Phe) + L-phenylalanine + ATP = L-phenylalanyl-tRNA(Phe) + AMP + diphosphate + H(+). This Synechococcus sp. (strain CC9902) protein is Phenylalanine--tRNA ligase beta subunit.